A 214-amino-acid polypeptide reads, in one-letter code: MNRLIIVFIVVTMICAATALSTKRRINKEEKDEKRSVAVAGAVIEGATLTFNVLQTVLKALGDISRKIAVGIDNESGMTWTAMNTYFRSGTSDIVLPYEVPHGKALLYNGQKDRGPVATGVVGVLAYAMSDGNTLAVLFSIPFDYNLYSNWWNVKVYKGHRRADQRMYEELYYNLSPFRGDNGWHNRDLGYGLTSRGFMNSSGQSILEIHVTKA.

An N-terminal signal peptide occupies residues 1–19 (MNRLIIVFIVVTMICAATA). The propeptide occupies 20 to 35 (LSTKRRINKEEKDEKR). The segment at 38–47 (AVAGAVIEGA) is plays an important role in the hemolytic activity. The N-terminal region stretch occupies residues 46–65 (GATLTFNVLQTVLKALGDIS). Serine 89, valine 122, serine 140, proline 142, tyrosine 168, tyrosine 172, and tyrosine 173 together coordinate phosphocholine. The trp-rich region, which is important for the binding to lipid membrane stretch occupies residues 140 to 155 (SIPFDYNLYSNWWNVK). Positions 179-181 (RGD) match the Cell attachment site, crucial for protein stability motif.

This sequence belongs to the actinoporin family. Sea anemone subfamily. As to quaternary structure, octamer or nonamer in membranes. Monomer in the soluble state.

Its subcellular location is the secreted. It is found in the nematocyst. The protein resides in the target cell membrane. Functionally, pore-forming protein that forms cations-selective hydrophilic pores of around 1 nm and causes cardiac stimulation and cytolysis. Pore formation is a multi-step process that involves specific recognition of membrane sphingomyelin (but neither cholesterol nor phosphatidylcholine) using aromatic rich region and adjacent phosphocholine (POC) binding site, firm binding to the membrane (mainly driven by hydrophobic interactions) accompanied by the transfer of the N-terminal region to the lipid-water interface and finally pore formation after oligomerization of monomers. The sequence is that of Cytolysin tenebrosin-B from Actinia tenebrosa (Australian red waratah sea anemone).